A 267-amino-acid polypeptide reads, in one-letter code: Transcription factor HES-1 (267 aa).

The segment at 1 to 45 (MPADLMEKNSSSPVAATPASMSNTPDKPKTASEHRKSSKPIMEKR) is disordered. Over residues 8 to 25 (KNSSSPVAATPASMSNTP) the composition is skewed to polar residues. Over residues 26-35 (DKPKTASEHR) the composition is skewed to basic and acidic residues. Residues 34 to 91 (HRKSSKPIMEKRRRARINESLGQLKTLILDALKKDSSRHSKLEKADILEMTVKHLRNL) enclose the bHLH domain. The 34-residue stretch at 110–143 (YRAGFSECMNEVTRFLSTCEGVNTDVRTRLLGHL) folds into the Orange domain. The WRPW motif signature appears at 264 to 267 (WRPW).

As to quaternary structure, transcription repression requires formation of a complex with a corepressor protein of the Groucho/TLE family. Interacts with the bHLH protein hes2, and binds DNA in the form of a heterodimer with the bHLH protein hey1/hrt1. Interacts with the bHLH protein hes6; this interaction may inhibit the transcriptional repressor activity.

It localises to the nucleus. Its function is as follows. Transcriptional repressor of a subset of early mesodermal genes including myod1 and t/bra. Binds DNA on N-box motifs: 5'-CACNAG-3'. Acts as a negative regulator of myogenesis, mediating Notch signaling to repress expression of myod1. The chain is Transcription factor HES-1 from Xenopus tropicalis (Western clawed frog).